A 68-amino-acid polypeptide reads, in one-letter code: ATP synthase F(0) complex subunit 8 (68 aa).

A helical transmembrane segment spans residues 8–24 (TWLITILSMILTLLIVF). Lysine 54 is subject to N6-acetyllysine; alternate. An N6-succinyllysine; alternate modification is found at lysine 54. N6-acetyllysine is present on lysine 57.

The protein belongs to the ATPase protein 8 family. Component of the ATP synthase complex composed at least of ATP5F1A/subunit alpha, ATP5F1B/subunit beta, ATP5MC1/subunit c (homooctomer), MT-ATP6/subunit a, MT-ATP8/subunit 8, ATP5ME/subunit e, ATP5MF/subunit f, ATP5MG/subunit g, ATP5MK/subunit k, ATP5MJ/subunit j, ATP5F1C/subunit gamma, ATP5F1D/subunit delta, ATP5F1E/subunit epsilon, ATP5PF/subunit F6, ATP5PB/subunit b, ATP5PD/subunit d, ATP5PO/subunit OSCP. ATP synthase complex consists of a soluble F(1) head domain (subunits alpha(3) and beta(3)) - the catalytic core - and a membrane F(0) domain - the membrane proton channel (subunits c, a, 8, e, f, g, k and j). These two domains are linked by a central stalk (subunits gamma, delta, and epsilon) rotating inside the F1 region and a stationary peripheral stalk (subunits F6, b, d, and OSCP). Interacts with PRICKLE3.

Its subcellular location is the mitochondrion membrane. Functionally, subunit 8, of the mitochondrial membrane ATP synthase complex (F(1)F(0) ATP synthase or Complex V) that produces ATP from ADP in the presence of a proton gradient across the membrane which is generated by electron transport complexes of the respiratory chain. ATP synthase complex consist of a soluble F(1) head domain - the catalytic core - and a membrane F(1) domain - the membrane proton channel. These two domains are linked by a central stalk rotating inside the F(1) region and a stationary peripheral stalk. During catalysis, ATP synthesis in the catalytic domain of F(1) is coupled via a rotary mechanism of the central stalk subunits to proton translocation. In vivo, can only synthesize ATP although its ATP hydrolase activity can be activated artificially in vitro. Part of the complex F(0) domain. This is ATP synthase F(0) complex subunit 8 from Lemur catta (Ring-tailed lemur).